Consider the following 196-residue polypeptide: Putative NADH dehydrogenase/NAD(P)H nitroreductase Pnuc_0932 (196 aa).

Belongs to the nitroreductase family. HadB/RutE subfamily. FMN is required as a cofactor.

This Polynucleobacter asymbioticus (strain DSM 18221 / CIP 109841 / QLW-P1DMWA-1) (Polynucleobacter necessarius subsp. asymbioticus) protein is Putative NADH dehydrogenase/NAD(P)H nitroreductase Pnuc_0932.